The primary structure comprises 183 residues: Adenine phosphoribosyltransferase (183 aa).

The protein belongs to the purine/pyrimidine phosphoribosyltransferase family. In terms of assembly, homodimer.

It is found in the cytoplasm. The catalysed reaction is AMP + diphosphate = 5-phospho-alpha-D-ribose 1-diphosphate + adenine. It functions in the pathway purine metabolism; AMP biosynthesis via salvage pathway; AMP from adenine: step 1/1. In terms of biological role, catalyzes a salvage reaction resulting in the formation of AMP, that is energically less costly than de novo synthesis. This Klebsiella pneumoniae subsp. pneumoniae (strain ATCC 700721 / MGH 78578) protein is Adenine phosphoribosyltransferase.